Here is a 716-residue protein sequence, read N- to C-terminus: Polyribonucleotide nucleotidyltransferase (716 aa).

Mg(2+) contacts are provided by Asp490 and Asp496. The KH domain maps to 556 to 615 (PKIETLTIPTDKIREVIGSGGKVIREIVETSGAKVDINDDGVIKIASNDQAAIKKAYDMI). One can recognise an S1 motif domain in the interval 625–693 (GQIYTGKVVK…ERGKVRLGMK (69 aa)). The tract at residues 695–716 (VDQETGQEIQPEKKEREEAGEA) is disordered. Residues 704–716 (QPEKKEREEAGEA) show a composition bias toward basic and acidic residues.

It belongs to the polyribonucleotide nucleotidyltransferase family. It depends on Mg(2+) as a cofactor.

It is found in the cytoplasm. It carries out the reaction RNA(n+1) + phosphate = RNA(n) + a ribonucleoside 5'-diphosphate. Functionally, involved in mRNA degradation. Catalyzes the phosphorolysis of single-stranded polyribonucleotides processively in the 3'- to 5'-direction. The sequence is that of Polyribonucleotide nucleotidyltransferase from Cereibacter sphaeroides (strain KD131 / KCTC 12085) (Rhodobacter sphaeroides).